A 694-amino-acid chain; its full sequence is Elongation factor G (694 aa).

One can recognise a tr-type G domain in the interval Glu-8–Thr-287. Residues Ala-17–Thr-24, Asp-86–His-90, and Asn-140–Asp-143 each bind GTP.

It belongs to the TRAFAC class translation factor GTPase superfamily. Classic translation factor GTPase family. EF-G/EF-2 subfamily.

The protein resides in the cytoplasm. In terms of biological role, catalyzes the GTP-dependent ribosomal translocation step during translation elongation. During this step, the ribosome changes from the pre-translocational (PRE) to the post-translocational (POST) state as the newly formed A-site-bound peptidyl-tRNA and P-site-bound deacylated tRNA move to the P and E sites, respectively. Catalyzes the coordinated movement of the two tRNA molecules, the mRNA and conformational changes in the ribosome. The polypeptide is Elongation factor G (Brucella melitensis biotype 1 (strain ATCC 23456 / CCUG 17765 / NCTC 10094 / 16M)).